The primary structure comprises 111 residues: Nucleoid-associated protein NGK_1136 (111 aa).

This sequence belongs to the YbaB/EbfC family. Homodimer.

The protein localises to the cytoplasm. It is found in the nucleoid. Its function is as follows. Binds to DNA and alters its conformation. May be involved in regulation of gene expression, nucleoid organization and DNA protection. The chain is Nucleoid-associated protein NGK_1136 from Neisseria gonorrhoeae (strain NCCP11945).